Consider the following 612-residue polypeptide: Calcium-dependent protein kinase 27 (612 aa).

Gly-2 carries N-myristoyl glycine lipidation. Positions 23–132 (PRHAAPSSPS…AHIKRISSAG (110 aa)) are disordered. Residues 28 to 50 (PSSPSQPTTTSRSIPVVLPSAPS) are compositionally biased toward low complexity. A compositionally biased stretch (pro residues) spans 51–100 (SKPPPPTQTAPPVPVVISEPPPPQPQPEPQPAAPSQPPPPQEQPSPPPPA). Positions 117–127 (SRAKKPAHIKR) are enriched in basic residues. The region spanning 150–408 (YSLGRKLGQG…AHEVLCHPWL (259 aa)) is the Protein kinase domain. ATP contacts are provided by residues 156-164 (LGQGQFGTT) and Lys-179. Asp-274 (proton acceptor) is an active-site residue. Residues 414–444 (APDKPLDSAVLSRLRQFSAMNKLKKMALRVI) are autoinhibitory domain. EF-hand domains follow at residues 451-486 (EEIA…VGAN), 487-522 (MKES…LNKV), 523-558 (ERED…FGIE), and 561-592 (RLED…TTTG). Residues Asp-464, Asp-466, Ser-468, Gln-470, Glu-475, Asp-500, Asp-502, Ser-504, Thr-506, Glu-511, Asp-536, Asp-538, Ser-540, Tyr-542, Glu-547, Asp-570, Asp-572, Asp-574, Arg-576, and Glu-581 each coordinate Ca(2+).

The protein belongs to the protein kinase superfamily. Ser/Thr protein kinase family. CDPK subfamily.

It localises to the membrane. It carries out the reaction L-seryl-[protein] + ATP = O-phospho-L-seryl-[protein] + ADP + H(+). The catalysed reaction is L-threonyl-[protein] + ATP = O-phospho-L-threonyl-[protein] + ADP + H(+). Its activity is regulated as follows. Activated by calcium. Autophosphorylation may play an important role in the regulation of the kinase activity. Its function is as follows. May play a role in signal transduction pathways that involve calcium as a second messenger. The polypeptide is Calcium-dependent protein kinase 27 (Oryza sativa subsp. japonica (Rice)).